The primary structure comprises 174 residues: Protein GrpE (174 aa).

The tract at residues 1–35 (MAQDIKNEEVEEVQEEEVVKTAEETTPEKSELDLA) is disordered. Residues 17 to 35 (EVVKTAEETTPEKSELDLA) show a composition bias toward basic and acidic residues.

The protein belongs to the GrpE family. As to quaternary structure, homodimer.

It localises to the cytoplasm. In terms of biological role, participates actively in the response to hyperosmotic and heat shock by preventing the aggregation of stress-denatured proteins, in association with DnaK and GrpE. It is the nucleotide exchange factor for DnaK and may function as a thermosensor. Unfolded proteins bind initially to DnaJ; upon interaction with the DnaJ-bound protein, DnaK hydrolyzes its bound ATP, resulting in the formation of a stable complex. GrpE releases ADP from DnaK; ATP binding to DnaK triggers the release of the substrate protein, thus completing the reaction cycle. Several rounds of ATP-dependent interactions between DnaJ, DnaK and GrpE are required for fully efficient folding. The polypeptide is Protein GrpE (Streptococcus pneumoniae serotype 4 (strain ATCC BAA-334 / TIGR4)).